The primary structure comprises 264 residues: Phosphonoacetaldehyde hydrolase (264 aa).

D9 serves as the catalytic Nucleophile. The Mg(2+) site is built by D9 and A11. The active-site Schiff-base intermediate with substrate is the K50. D183 lines the Mg(2+) pocket.

This sequence belongs to the HAD-like hydrolase superfamily. PhnX family. As to quaternary structure, homodimer. It depends on Mg(2+) as a cofactor.

It carries out the reaction phosphonoacetaldehyde + H2O = acetaldehyde + phosphate + H(+). Involved in phosphonate degradation. This chain is Phosphonoacetaldehyde hydrolase, found in Bacillus cytotoxicus (strain DSM 22905 / CIP 110041 / 391-98 / NVH 391-98).